Consider the following 417-residue polypeptide: NADH-quinone oxidoreductase subunit D (417 aa).

Belongs to the complex I 49 kDa subunit family. NDH-1 is composed of 14 different subunits. Subunits NuoB, C, D, E, F, and G constitute the peripheral sector of the complex.

Its subcellular location is the cell inner membrane. It carries out the reaction a quinone + NADH + 5 H(+)(in) = a quinol + NAD(+) + 4 H(+)(out). Functionally, NDH-1 shuttles electrons from NADH, via FMN and iron-sulfur (Fe-S) centers, to quinones in the respiratory chain. The immediate electron acceptor for the enzyme in this species is believed to be ubiquinone. Couples the redox reaction to proton translocation (for every two electrons transferred, four hydrogen ions are translocated across the cytoplasmic membrane), and thus conserves the redox energy in a proton gradient. The polypeptide is NADH-quinone oxidoreductase subunit D (Burkholderia vietnamiensis (strain G4 / LMG 22486) (Burkholderia cepacia (strain R1808))).